Reading from the N-terminus, the 319-residue chain is Acetyl-coenzyme A carboxylase carboxyl transferase subunit alpha (319 aa).

The 262-residue stretch at 35–296 folds into the CoA carboxyltransferase C-terminal domain; that stretch reads NLDEEVQRLR…KAQLLADLSD (262 aa).

This sequence belongs to the AccA family. As to quaternary structure, acetyl-CoA carboxylase is a heterohexamer composed of biotin carboxyl carrier protein (AccB), biotin carboxylase (AccC) and two subunits each of ACCase subunit alpha (AccA) and ACCase subunit beta (AccD).

The protein resides in the cytoplasm. The enzyme catalyses N(6)-carboxybiotinyl-L-lysyl-[protein] + acetyl-CoA = N(6)-biotinyl-L-lysyl-[protein] + malonyl-CoA. It functions in the pathway lipid metabolism; malonyl-CoA biosynthesis; malonyl-CoA from acetyl-CoA: step 1/1. Functionally, component of the acetyl coenzyme A carboxylase (ACC) complex. First, biotin carboxylase catalyzes the carboxylation of biotin on its carrier protein (BCCP) and then the CO(2) group is transferred by the carboxyltransferase to acetyl-CoA to form malonyl-CoA. The polypeptide is Acetyl-coenzyme A carboxylase carboxyl transferase subunit alpha (Yersinia enterocolitica serotype O:8 / biotype 1B (strain NCTC 13174 / 8081)).